A 432-amino-acid chain; its full sequence is Glial fibrillary acidic protein (432 aa).

Residues 1-72 (MERRRITSAA…KETRASERAE (72 aa)) form a head region. A Phosphothreonine; by AURKB and ROCK1 modification is found at Thr7. An Omega-N-methylarginine modification is found at Arg12. Phosphoserine; by AURKB and ROCK1 is present on Ser13. Citrulline is present on residues Arg30 and Arg36. Ser38 bears the Phosphoserine; by AURKB and ROCK1 mark. An IF rod domain is found at 69–377 (ERAEMMELND…KLLEGEENRI (309 aa)). The coil 1A stretch occupies residues 73–104 (MMELNDRFASYIEKVRFLEQQNKALAAELNQL). Ser82 bears the Phosphoserine mark. The interval 105–115 (RAKEPTKLADV) is linker 1. A phosphothreonine mark is found at Thr110 and Thr150. The interval 116–214 (YQAELRELRL…EEEVRELQEQ (99 aa)) is coil 1B. Positions 215 to 230 (LARQQVHVELDMAKPD) are linker 12. A coil 2A region spans residues 231 to 252 (LTAALKEIRTQYEAMASSNMHE). The linker 2 stretch occupies residues 253-256 (AEEW). Residues 257-377 (YRSKFADLTD…KLLEGEENRI (121 aa)) form a coil 2B region. Position 270 is a citrulline (Arg270). Ser323 is modified (phosphoserine). Positions 378–432 (TIPVQTFSNLQIRETSLDTKSVSEGHLKRNIVVKTVEMRDGEVIKESKQEHKDVM) are tail. Thr383 is subject to Phosphothreonine. Ser385 is subject to Phosphoserine. Citrulline is present on residues Arg406 and Arg416.

It belongs to the intermediate filament family. As to quaternary structure, interacts with SYNM. Post-translationally, phosphorylated by PKN1.

Its subcellular location is the cytoplasm. Its function is as follows. GFAP, a class-III intermediate filament, is a cell-specific marker that, during the development of the central nervous system, distinguishes astrocytes from other glial cells. In Pongo abelii (Sumatran orangutan), this protein is Glial fibrillary acidic protein (GFAP).